An 888-amino-acid polypeptide reads, in one-letter code: MGQSVLRAVFFLVLGLLGHSHGGFPNTISIGGLFMRNTVQEHSAFRFAVQLYNTNQNTTEKPFHLNYHVDHLDSSNSFSVTNAFCSQFSRGVYAIFGFYDQMSMNTLTSFCGALHTSFVTPSFPTDADVQFVIQMRPALKGAILSLLGYYKWEKFVYLYDTERGFSILQAIMEAAVQNNWQVTARSVGNIKDIQEFRRIIEEMDRRQEKRYLIDCEVERINTILEQVVILGKHSRGYHYMLANLGFTDIVLERVMHGGANITGFQIVNNENPMVQQFIQRWVRLDEREFPEAKNAPLKYTSALTHDAILVIAEAFRYLRRQRVDVSRRGSAGDCLANPAVPWSQGIDIERALKMVQVQGMTGNIQFDTYGRRTNYTIDVYEMKVSGSRKAGYWNEYERFVPFSDQQISNDSSSSENRTIVVTTILESPYVMYKKNHEQLEGNERYEGYCVDLAYEIAKHVRIKYKLSIVGDGKYGARDPETKIWNGMVGELVYGRADIAVAPLTITLVREEVIDFSKPFMSLGISIMIKKPQKSKPGVFSFLDPLAYEIWMCIVFAYIGVSVVLFLVSRFSPYEWHLEDNNEEPRDPQSPPDPPNEFGIFNSLWFSLGAFMQQGCDISPRSLSGRIVGGVWWFFTLIIISSYTANLAAFLTVERMVSPIESAEDLAKQTEIAYGTLDSGSTKEFFRRSKIAVYEKMWSYMKSAEPSVFTKTTADGVARVRKSKGKFAFLLESTMNEYIEQRKPCDTMKVGGNLDSKGYGVATPKGSALRTPVNLAVLKLSEQGILDKLKNKWWYDKGECGAKDSGSKDKTSALSLSNVAGVFYILVGGLGLAMMVALIEFCYKSRAESKRMKLTKNTQNFKPAPATNTQNYATYREGYNVYGTESVKI.

The signal sequence occupies residues 1 to 22 (MGQSVLRAVFFLVLGLLGHSHG). Topologically, residues 23–546 (GFPNTISIGG…GVFSFLDPLA (524 aa)) are extracellular. Asn57, Asn260, Asn374, Asn409, and Asn416 each carry an N-linked (GlcNAc...) asparagine glycan. Cys85 and Cys334 are disulfide-bonded. Residues Pro502, Thr504, and Arg509 each contribute to the L-glutamate site. Residues 547–567 (YEIWMCIVFAYIGVSVVLFLV) traverse the membrane as a helical segment. At 568–596 (SRFSPYEWHLEDNNEEPRDPQSPPDPPNE) the chain is on the cytoplasmic side. The segment at residues 597–612 (FGIFNSLWFSLGAFMQ) is an intramembrane region (helical; Pore-forming). Residues 613–615 (QGC) lie within the membrane without spanning it. Cys615 carries the S-palmitoyl cysteine lipid modification. At 616–621 (DISPRS) the chain is on the cytoplasmic side. A helical membrane pass occupies residues 622–642 (LSGRIVGGVWWFFTLIIISSY). The Extracellular portion of the chain corresponds to 643–817 (TANLAAFLTV…DKTSALSLSN (175 aa)). L-glutamate contacts are provided by Ser680, Thr681, and Glu731. Cysteines 744 and 799 form a disulfide. A helical transmembrane segment spans residues 818–838 (VAGVFYILVGGLGLAMMVALI). Residues 839 to 888 (EFCYKSRAESKRMKLTKNTQNFKPAPATNTQNYATYREGYNVYGTESVKI) lie on the Cytoplasmic side of the membrane. A lipid anchor (S-palmitoyl cysteine) is attached at Cys841. 2 positions are modified to phosphotyrosine: Tyr871 and Tyr881.

It belongs to the glutamate-gated ion channel (TC 1.A.10.1) family. GRIA3 subfamily. In terms of assembly, homotetramer or heterotetramer of pore-forming glutamate receptor subunits. Tetramers may be formed by the dimerization of dimers. Interacts with PICK1, GRIP1 and GRIP2. Found in a complex with GRIA1, GRIA2, GRIA4, CNIH2, CNIH3, CACNG2, CACNG3, CACNG4, CACNG5, CACNG7 and CACNG8. Interacts with CACNG5. Found in a complex with GRIA1, GRIA2, GRIA4, DLG4, CACNG8 and CNIH2.

Its subcellular location is the cell membrane. It is found in the postsynaptic cell membrane. The protein resides in the postsynaptic density membrane. The catalysed reaction is Ca(2+)(in) = Ca(2+)(out). Its function is as follows. Ionotropic glutamate receptor that functions as a ligand-gated cation channel, gated by L-glutamate and glutamatergic agonists such as alpha-amino-3-hydroxy-5-methyl-4-isoxazolepropionic acid (AMPA), quisqualic acid, and kainic acid. L-glutamate acts as an excitatory neurotransmitter at many synapses in the central nervous system and plays an important role in fast excitatory synaptic transmission by inducing long-term potentiation. Binding of the excitatory neurotransmitter L-glutamate induces a conformation change, leading to the opening of the cation channel, and thereby converts the chemical signal to an electrical impulse upon entry of calcium. The receptor then desensitizes rapidly and enters a transient inactive state, characterized by the presence of bound agonist. In the presence of CACNG8, shows resensitization which is characterized by a delayed accumulation of current flux upon continued application of glutamate. The protein is Glutamate receptor 3 of Mus musculus (Mouse).